Reading from the N-terminus, the 271-residue chain is Phosphatidylglycerol--prolipoprotein diacylglyceryl transferase (271 aa).

A run of 7 helical transmembrane segments spans residues 21-41 (ISVR…MWLA), 60-80 (LLFA…VLFY), 95-115 (VWTG…AMLW), 124-144 (FFGV…VGRL), 176-196 (SQLY…NWFI), 203-223 (GSVS…VEYV), and 230-250 (LGLF…MIIG). Residue Arg-143 participates in a 1,2-diacyl-sn-glycero-3-phospho-(1'-sn-glycerol) binding.

It belongs to the Lgt family.

Its subcellular location is the cell inner membrane. The enzyme catalyses L-cysteinyl-[prolipoprotein] + a 1,2-diacyl-sn-glycero-3-phospho-(1'-sn-glycerol) = an S-1,2-diacyl-sn-glyceryl-L-cysteinyl-[prolipoprotein] + sn-glycerol 1-phosphate + H(+). It functions in the pathway protein modification; lipoprotein biosynthesis (diacylglyceryl transfer). Functionally, catalyzes the transfer of the diacylglyceryl group from phosphatidylglycerol to the sulfhydryl group of the N-terminal cysteine of a prolipoprotein, the first step in the formation of mature lipoproteins. In Vibrio vulnificus (strain CMCP6), this protein is Phosphatidylglycerol--prolipoprotein diacylglyceryl transferase.